Here is a 296-residue protein sequence, read N- to C-terminus: Glycine--tRNA ligase alpha subunit (296 aa).

The protein belongs to the class-II aminoacyl-tRNA synthetase family. In terms of assembly, tetramer of two alpha and two beta subunits.

The protein resides in the cytoplasm. It carries out the reaction tRNA(Gly) + glycine + ATP = glycyl-tRNA(Gly) + AMP + diphosphate. This Listeria innocua serovar 6a (strain ATCC BAA-680 / CLIP 11262) protein is Glycine--tRNA ligase alpha subunit.